Reading from the N-terminus, the 430-residue chain is MANVVVVGAQWGDEGKGKIVDWLSEQADIVVRFQGGHNAGHTLVINGATYKLALLPSGVLRTGKLSVIGNGVVFDPQAFLDEVSKLQSQGVAISPDNLRVAENVTLILPLHRELDALRESASAATAIGTTRRGIGPAYEDKVGRRAIRLMDLADLDTLPHKIDRLLAHHNALRRGLGLEQIDGKDILRELTAFAPKLLPYAETVWRLLDIKRREGKRMLFEGAQGALLDVDHGTYPYVTSSNTVAAQAATGAGLGPGAIGYVLGLCKAYTTRVGQGPFPTEQDNETGRKIGERGREFGTNTGRPRRCGWFDAVLVRQAVRTCGINGLALTKLDILDGFDTIDVCTGYRLDGKEIDHFPAGEGAQARVEPIYETIEGWKQPTANARSWADLPAQAIKYVRRIEELVGCPIALLSTSPEREDTILVQNPFEA.

Residues 12–18 (GDEGKGK) and 40–42 (GHT) each bind GTP. Asp-13 acts as the Proton acceptor in catalysis. The Mg(2+) site is built by Asp-13 and Gly-40. Residues 13-16 (DEGK), 38-41 (NAGH), Thr-130, Arg-144, Gln-224, and Thr-239 each bind IMP. His-41 acts as the Proton donor in catalysis. The tract at residues 277–298 (PFPTEQDNETGRKIGERGREFG) is disordered. Over residues 285 to 296 (ETGRKIGERGRE) the composition is skewed to basic and acidic residues. 299-305 (TNTGRPR) is a substrate binding site. Residue Arg-303 coordinates IMP. GTP-binding positions include Arg-305, 331–333 (KLD), and 413–415 (STS).

The protein belongs to the adenylosuccinate synthetase family. Homodimer. The cofactor is Mg(2+).

The protein resides in the cytoplasm. It catalyses the reaction IMP + L-aspartate + GTP = N(6)-(1,2-dicarboxyethyl)-AMP + GDP + phosphate + 2 H(+). Its pathway is purine metabolism; AMP biosynthesis via de novo pathway; AMP from IMP: step 1/2. Its function is as follows. Plays an important role in the de novo pathway of purine nucleotide biosynthesis. Catalyzes the first committed step in the biosynthesis of AMP from IMP. The protein is Adenylosuccinate synthetase of Bradyrhizobium sp. (strain BTAi1 / ATCC BAA-1182).